The chain runs to 418 residues: MTLLALGINHKTAPVSLRERVSFSPDKLDQALDSLLAQPMVQGGVVLSTCNRTELYLSVEEQDNLQEALIRWLCDYHNLNEEDLRKSLYWHQDNDAVSHLMRVASGLDSLVLGEPQILGQVKKAFADSQKGHMKASELERMFQKSFSVAKRVRTETDIGASAVSVAFAACTLARQIFESLSTVTVLLVGAGETIELVARHLREHKVQKMIIANRTRERAQILADEVGAEVIALSDIDERLREADIIISSTASPLPIIGKGMVERALKSRRNQPMLLVDIAVPRDVEPEVGKLANAYLYSVDDLQSIISHNLAQRKAAAVEAETIVAQETSEFMSWLRAQSASETIREYRSQAEHIRDELTAKALAALEQGGDAQAIMQDLAWKLTNRLIHAPTKSLQQAARDGDNERLNILRDSLGLE.

Substrate contacts are provided by residues 49–52, Ser-109, 114–116, and Gln-120; these read TCNR and EPQ. The active-site Nucleophile is the Cys-50. 189–194 serves as a coordination point for NADP(+); it reads GAGETI.

Belongs to the glutamyl-tRNA reductase family. Homodimer.

It catalyses the reaction (S)-4-amino-5-oxopentanoate + tRNA(Glu) + NADP(+) = L-glutamyl-tRNA(Glu) + NADPH + H(+). The protein operates within porphyrin-containing compound metabolism; protoporphyrin-IX biosynthesis; 5-aminolevulinate from L-glutamyl-tRNA(Glu): step 1/2. In terms of biological role, catalyzes the NADPH-dependent reduction of glutamyl-tRNA(Glu) to glutamate 1-semialdehyde (GSA). This chain is Glutamyl-tRNA reductase, found in Escherichia fergusonii (strain ATCC 35469 / DSM 13698 / CCUG 18766 / IAM 14443 / JCM 21226 / LMG 7866 / NBRC 102419 / NCTC 12128 / CDC 0568-73).